A 240-amino-acid chain; its full sequence is MGKTQPLPILITGGGRRIGLALAWHFINQKQPVIVSYRTHYPAIDGLIKAGAQCIQADFSTNDGVMAFADEVLKSTHGLRAILHNASAWMAEKPGAPLTDVLACMMQIHVNTPYLLNHALERLLRGHGHAASDIIHFTDYVVERGSDKHIAYAASKAALDNMTRSFARKLAPEVKVNSIAPSLILFNEHDDAEYRQQALNKSLMKTAPGEKEVIDLVDYLLTSCFVTGRSLPLDGGRHLR.

Catalysis depends on tyrosine 152, which acts as the Proton acceptor.

This sequence belongs to the short-chain dehydrogenases/reductases (SDR) family. FolM subfamily.

It carries out the reaction (6S)-5,6,7,8-tetrahydrofolate + NADP(+) = 7,8-dihydrofolate + NADPH + H(+). The catalysed reaction is 7,8-dihydromonapterin + NADPH + H(+) = 5,6,7,8-tetrahydromonapterin + NADP(+). Catalyzes the reduction of dihydromonapterin to tetrahydromonapterin. Also has lower activity with dihydrofolate. This chain is Dihydromonapterin reductase (folM), found in Escherichia coli O6:K15:H31 (strain 536 / UPEC).